We begin with the raw amino-acid sequence, 502 residues long: Mannitol 2-dehydrogenase (502 aa).

Residue 37-48 (IVHIGVGGFHRA) coordinates NAD(+).

The protein belongs to the mannitol dehydrogenase family. Monomer.

It catalyses the reaction D-mannitol + NAD(+) = D-fructose + NADH + H(+). Catalyzes the NAD(H)-dependent interconversion of D-fructose and D-mannitol in the mannitol metabolic pathway. In Aspergillus clavatus (strain ATCC 1007 / CBS 513.65 / DSM 816 / NCTC 3887 / NRRL 1 / QM 1276 / 107), this protein is Mannitol 2-dehydrogenase.